The sequence spans 432 residues: Adenosylhomocysteinase (432 aa).

Substrate is bound by residues threonine 56, aspartate 131, and glutamate 156. Residue 157-159 coordinates NAD(+); sequence TTT. The substrate site is built by lysine 186 and aspartate 190. NAD(+) is bound by residues 222–227, glutamate 243, asparagine 248, 299–301, asparagine 346, histidine 353, lysine 426, 426–430, and tyrosine 430; these read GDVGKG, IGH, and KPDHY.

Belongs to the adenosylhomocysteinase family. In terms of assembly, interacts with AhcyL1; the interaction may negatively regulate Ahcy catalytic activity. It depends on NAD(+) as a cofactor.

It catalyses the reaction S-adenosyl-L-homocysteine + H2O = L-homocysteine + adenosine. It functions in the pathway amino-acid biosynthesis; L-homocysteine biosynthesis; L-homocysteine from S-adenosyl-L-homocysteine: step 1/1. Its function is as follows. Adenosylhomocysteine is a competitive inhibitor of S-adenosyl-L-methionine-dependent methyl transferase reactions; therefore adenosylhomocysteinase may play a key role in the control of methylations via regulation of the intracellular concentration of adenosylhomocysteine. The chain is Adenosylhomocysteinase from Drosophila melanogaster (Fruit fly).